Reading from the N-terminus, the 667-residue chain is Gamma-tubulin complex component 4 (667 aa).

Residues 424–446 (DHKADATQPREVPSRETSPREAP) form a disordered region.

It belongs to the TUBGCP family. As to quaternary structure, component of the gamma-tubulin ring complex (gTuRC) consisting of TUBGCP2, TUBGCP3, TUBGCP4, TUBGCP5 and TUBGCP6 and gamma-tubulin TUBG1 or TUBG2. TUBGCP2, TUBGCP3, TUBGCP4, TUBGCP5 and TUBGCP6 assemble in a 5:5:2:1:1 stoichiometry; each is associated with a gamma-tubulin, thereby arranging 14 gamma-tubulins in a helical manner. Gamma-tubulin at the first position is blocked by TUBGCP3 at the last position, allowing 13 protafilaments to grow into a microtubule. The gTuRC (via TUBGCP3 and TUBGCP6) interacts with ACTB and MZT1; the interactions form a luminal bridge that stabilizes the initial structure during complex assembly. The gTuRC (via TUBGCP2) interacts with MZT2A/MZT2B and CDK5RAP2 (via CM1 motif); the interactions play a role in gTuRC activation. Interacts with NINL. Interacts with ATF5; the ATF5:PCNT:polyglutamylated tubulin (PGT) tripartite unites the mother centriole and the pericentriolar material (PCM) in the centrosome.

It localises to the cytoplasm. Its subcellular location is the cytoskeleton. It is found in the microtubule organizing center. The protein localises to the centrosome. Functionally, component of the gamma-tubulin ring complex (gTuRC) which mediates microtubule nucleation. The gTuRC regulates the minus-end nucleation of alpha-beta tubulin heterodimers that grow into microtubule protafilaments, a critical step in centrosome duplication and spindle formation. The polypeptide is Gamma-tubulin complex component 4 (Tubgcp4) (Mus musculus (Mouse)).